The following is a 232-amino-acid chain: Triosephosphate isomerase (232 aa).

6-8 (NFK) is a binding site for substrate. Histidine 86 functions as the Electrophile in the catalytic mechanism. Glutamate 155 serves as the catalytic Proton acceptor. Substrate is bound by residues glycine 161 and serine 191.

Belongs to the triosephosphate isomerase family. In terms of assembly, homodimer.

It localises to the cytoplasm. The catalysed reaction is D-glyceraldehyde 3-phosphate = dihydroxyacetone phosphate. Its pathway is carbohydrate biosynthesis; gluconeogenesis. The protein operates within carbohydrate degradation; glycolysis; D-glyceraldehyde 3-phosphate from glycerone phosphate: step 1/1. In terms of biological role, involved in the gluconeogenesis. Catalyzes stereospecifically the conversion of dihydroxyacetone phosphate (DHAP) to D-glyceraldehyde-3-phosphate (G3P). The polypeptide is Triosephosphate isomerase (Nitratiruptor sp. (strain SB155-2)).